The sequence spans 313 residues: MKTLLLLIPLVLTACGTLTGIPAHGGGKRFAVEQELVAASSRAAVKEMDLSALKGRKAALYVSVMGDQGSGNISGGRYSIDALIRGGYHNNPESATQYSYPAYDTTATTKADALSSVTTSTSLLNAPAAALTRNSGRKGERSAGLSVNGTGDYRNETLLANPRDVSFLTNLIQTVFYLRGIEVVPPEYADTDVFVTVDVFGTVRSRTELHLYNAETLKAQTKLEYFAVDRDSRKLLIAPETAAYESQYQEQYALWMGPYSVGKTVKASDRLMVDFSDITPYGDTTAQNRPDFKQNNGKKPDVGNEVIRRRKGG.

The first 14 residues, 1–14 (MKTLLLLIPLVLTA), serve as a signal peptide directing secretion. The N-palmitoyl cysteine moiety is linked to residue Cys-15. Cys-15 carries S-diacylglycerol cysteine lipidation. Polar residues predominate over residues 282-297 (GDTTAQNRPDFKQNNG). The interval 282–313 (GDTTAQNRPDFKQNNGKKPDVGNEVIRRRKGG) is disordered.

The protein belongs to the MafA family.

Its subcellular location is the cell outer membrane. The chain is Adhesin MafA 2 (mafA2) from Neisseria meningitidis serogroup C / serotype 2a (strain ATCC 700532 / DSM 15464 / FAM18).